Consider the following 171-residue polypeptide: Shikimate kinase (171 aa).

Position 14–19 (G14–T19) interacts with ATP. Residue S18 participates in Mg(2+) binding. Substrate contacts are provided by D36, R60, and G82. R120 is a binding site for ATP. Residue R139 participates in substrate binding. Q156 is an ATP binding site.

It belongs to the shikimate kinase family. Monomer. Mg(2+) serves as cofactor.

The protein resides in the cytoplasm. It catalyses the reaction shikimate + ATP = 3-phosphoshikimate + ADP + H(+). It participates in metabolic intermediate biosynthesis; chorismate biosynthesis; chorismate from D-erythrose 4-phosphate and phosphoenolpyruvate: step 5/7. Catalyzes the specific phosphorylation of the 3-hydroxyl group of shikimic acid using ATP as a cosubstrate. The polypeptide is Shikimate kinase (Shewanella baltica (strain OS195)).